The primary structure comprises 209 residues: Kynurenine formamidase (209 aa).

Tryptophan 20 contacts substrate. Zn(2+)-binding residues include histidine 50, histidine 54, and aspartate 56. Residue histidine 60 is the Proton donor/acceptor of the active site. The Zn(2+) site is built by histidine 161 and glutamate 173.

It belongs to the Cyclase 1 superfamily. KynB family. As to quaternary structure, homodimer. The cofactor is Zn(2+).

The enzyme catalyses N-formyl-L-kynurenine + H2O = L-kynurenine + formate + H(+). The protein operates within amino-acid degradation; L-tryptophan degradation via kynurenine pathway; L-kynurenine from L-tryptophan: step 2/2. Catalyzes the hydrolysis of N-formyl-L-kynurenine to L-kynurenine, the second step in the kynurenine pathway of tryptophan degradation. The sequence is that of Kynurenine formamidase from Bacillus cytotoxicus (strain DSM 22905 / CIP 110041 / 391-98 / NVH 391-98).